We begin with the raw amino-acid sequence, 221 residues long: 7-cyano-7-deazaguanine synthase (221 aa).

8 to 18 is a binding site for ATP; that stretch reads LSGGMDSAAVI. Zn(2+) contacts are provided by cysteine 186, cysteine 196, cysteine 199, and cysteine 202.

The protein belongs to the QueC family. Zn(2+) serves as cofactor.

It catalyses the reaction 7-carboxy-7-deazaguanine + NH4(+) + ATP = 7-cyano-7-deazaguanine + ADP + phosphate + H2O + H(+). It functions in the pathway purine metabolism; 7-cyano-7-deazaguanine biosynthesis. Functionally, catalyzes the ATP-dependent conversion of 7-carboxy-7-deazaguanine (CDG) to 7-cyano-7-deazaguanine (preQ(0)). This Stenotrophomonas maltophilia (strain R551-3) protein is 7-cyano-7-deazaguanine synthase.